Here is a 205-residue protein sequence, read N- to C-terminus: Ras-related protein Rab-1A (205 aa).

S2 is subject to N-acetylserine. S20, G21, G23, K24, S25, C26, E38, and T43 together coordinate GTP. S25 is a Mg(2+) binding site. The Switch 1 motif lies at D34–F48. T43 contacts Mg(2+). Residues K49 and K61 each participate in a glycyl lysine isopeptide (Lys-Gly) (interchain with G-Cter in ubiquitin) cross-link. D66 is a binding site for Mg(2+). The short motif at D66–G83 is the Switch 2 element. GTP-binding residues include G69, N124, K125, D127, A155, and K156. Residues P178–C205 form a disordered region. A Phosphoserine modification is found at S194. S-geranylgeranyl cysteine attachment occurs at residues C204 and C205.

It belongs to the small GTPase superfamily. Rab family. As to quaternary structure, may interact with YIPF5. Interacts with C9orf72; the interaction mediates recruitment of RAB1A to the ATG1/ULK1 kinase complex. Interacts with GDI1; this promotes dissociation from membranes. Mg(2+) is required as a cofactor. Post-translationally, phosphorylated by CDK1 kinase during mitosis. Ubiquitinated via 'Lys-11'-linked ubiquitination on Lys-49 and Lys-61; impairing the recruitment of guanosine diphosphate (GDP) dissociation inhibitor 1/GDI1.

The protein localises to the golgi apparatus. It localises to the endoplasmic reticulum. Its subcellular location is the early endosome. The protein resides in the cytoplasm. It is found in the cytosol. The protein localises to the membrane. It localises to the melanosome. The enzyme catalyses GTP + H2O = GDP + phosphate + H(+). With respect to regulation, regulated by guanine nucleotide exchange factors (GEFs) which promote the exchange of bound GDP for free GTP. Regulated by GTPase activating proteins (GAPs) which increase the GTP hydrolysis activity. Inhibited by GDP dissociation inhibitors (GDIs). The small GTPases Rab are key regulators of intracellular membrane trafficking, from the formation of transport vesicles to their fusion with membranes. Rabs cycle between an inactive GDP-bound form and an active GTP-bound form that is able to recruit to membranes different sets of downstream effectors directly responsible for vesicle formation, movement, tethering and fusion. RAB1A regulates vesicular protein transport from the endoplasmic reticulum (ER) to the Golgi compartment and on to the cell surface, and plays a role in IL-8 and growth hormone secretion. Required to modulate the compacted morphology of the Golgi. Regulates the level of CASR present at the cell membrane. Plays a role in cell adhesion and cell migration, via its role in protein trafficking. Plays a role in autophagosome assembly and cellular defense reactions against pathogenic bacteria. Plays a role in microtubule-dependent protein transport by early endosomes and in anterograde melanosome transport. The polypeptide is Ras-related protein Rab-1A (RAB1A) (Canis lupus familiaris (Dog)).